The following is a 174-amino-acid chain: RNA pyrophosphohydrolase (174 aa).

Residues 6-149 form the Nudix hydrolase domain; that stretch reads GFRANVGIII…KRDVYRKVMK (144 aa). Positions 38 to 59 match the Nudix box motif; the sequence is GGVDDGETAEEAMYRELYEEVG.

This sequence belongs to the Nudix hydrolase family. RppH subfamily. Requires a divalent metal cation as cofactor.

Accelerates the degradation of transcripts by removing pyrophosphate from the 5'-end of triphosphorylated RNA, leading to a more labile monophosphorylated state that can stimulate subsequent ribonuclease cleavage. This chain is RNA pyrophosphohydrolase, found in Shewanella baltica (strain OS223).